Consider the following 90-residue polypeptide: MTRAVVTVIGADRPGIVAGISSVLAEHNANIEDISQTVLRDLFAMVMLVDLSEADVSVGKLREELQKAGEELGVDVIVQHEDVYRAMHRV.

The region spanning 5–79 (VVTVIGADRP…EELGVDVIVQ (75 aa)) is the ACT domain.

The protein belongs to the UPF0237 family.

This chain is UPF0237 protein MK1213, found in Methanopyrus kandleri (strain AV19 / DSM 6324 / JCM 9639 / NBRC 100938).